Reading from the N-terminus, the 488-residue chain is MQESQDTHMSSHLDEVVAAVSVTSKNRIPNKLLQTALFQPPREKLHLCEERAKSYSSSREYKQAIQELVRCVALTRICYGDWHWKLAEAYVNLAQGYLQLKGLSLQAKQHAEKAKEILANSIESPCHNKTDIFKCSLELFYTLGRALLSLQKFKDASENLIKAERLSKEMLQCGNIVKEEWIEIQSRIKLSFAQLYQGQKRSKEAFPFYQKALEYTEITKDEKSLECVQVLRELAGVEQALGLYAAAISHFSRDRLPTPQPCPLGHKCCCPSPFLSPVLNVTWRPFYSSQVDEEEAHLIILSKDPSPEEAADSAHFIARAAAASGMHDHRDVAEKYFQESMTSIKDSEGAERAKFLSIQDEFCSFLQTTGQKERAAMILRESLEAKVGAFGDFSPEVAETYRALGRADLAQGNNSGAYAKLKKCVQIETFLYGSQDKKTLATQHTIDTLSKISEAAGKSRQSVKAKVAFCTSAPQYGMPGKGRHSVAD.

5 TPR repeats span residues 45-78 (LHLC…TRIC), 137-170 (LELF…SKEM), 186-219 (SRIK…TEIT), 228-261 (VQVL…TPQP), and 398-431 (AETY…ETFL).

In terms of assembly, associated with the EvC complex composed of EFCAB7, IQCE, EVC2 and EVC.

Its subcellular location is the cell projection. The protein localises to the cilium. In terms of biological role, participates positively in the ciliary Hedgehog (Hh) signaling. This chain is Tetratricopeptide repeat protein 23 (Ttc23), found in Mus musculus (Mouse).